A 149-amino-acid chain; its full sequence is 3-dehydroquinate dehydratase (149 aa).

Tyr-26 functions as the Proton acceptor in the catalytic mechanism. 3 residues coordinate substrate: Asn-78, His-84, and Asp-91. Residue His-104 is the Proton donor of the active site. Substrate is bound by residues 105–106 (LS) and Arg-115.

Belongs to the type-II 3-dehydroquinase family. Homododecamer.

It carries out the reaction 3-dehydroquinate = 3-dehydroshikimate + H2O. It participates in metabolic intermediate biosynthesis; chorismate biosynthesis; chorismate from D-erythrose 4-phosphate and phosphoenolpyruvate: step 3/7. Its function is as follows. Catalyzes a trans-dehydration via an enolate intermediate. This Polynucleobacter asymbioticus (strain DSM 18221 / CIP 109841 / QLW-P1DMWA-1) (Polynucleobacter necessarius subsp. asymbioticus) protein is 3-dehydroquinate dehydratase.